We begin with the raw amino-acid sequence, 507 residues long: Probable Xaa-Pro aminopeptidase HCAG_02413 (507 aa).

Asp283, Asp294, Glu431, and Glu469 together coordinate Mn(2+).

It belongs to the peptidase M24B family. Mn(2+) serves as cofactor.

It catalyses the reaction Release of any N-terminal amino acid, including proline, that is linked to proline, even from a dipeptide or tripeptide.. Its function is as follows. Catalyzes the removal of a penultimate prolyl residue from the N-termini of peptides. In Ajellomyces capsulatus (strain NAm1 / WU24) (Darling's disease fungus), this protein is Probable Xaa-Pro aminopeptidase HCAG_02413.